Here is a 147-residue protein sequence, read N- to C-terminus: Ribosomal RNA large subunit methyltransferase H (147 aa).

S-adenosyl-L-methionine-binding positions include L64, G96, and 115 to 120 (FSKMTF).

Belongs to the RNA methyltransferase RlmH family. As to quaternary structure, homodimer.

The protein localises to the cytoplasm. It carries out the reaction pseudouridine(1915) in 23S rRNA + S-adenosyl-L-methionine = N(3)-methylpseudouridine(1915) in 23S rRNA + S-adenosyl-L-homocysteine + H(+). Functionally, specifically methylates the pseudouridine at position 1915 (m3Psi1915) in 23S rRNA. This is Ribosomal RNA large subunit methyltransferase H from Acholeplasma laidlawii (strain PG-8A).